The sequence spans 487 residues: Cobyric acid synthase (487 aa).

The GATase cobBQ-type domain occupies 249–435 (GIDIAIVRLP…IHGIFDEGDF (187 aa)). The Nucleophile role is filled by C330. The active site involves H427.

This sequence belongs to the CobB/CobQ family. CobQ subfamily.

The protein operates within cofactor biosynthesis; adenosylcobalamin biosynthesis. Functionally, catalyzes amidations at positions B, D, E, and G on adenosylcobyrinic A,C-diamide. NH(2) groups are provided by glutamine, and one molecule of ATP is hydrogenolyzed for each amidation. The chain is Cobyric acid synthase from Clostridium perfringens (strain SM101 / Type A).